We begin with the raw amino-acid sequence, 233 residues long: Outer membrane protein MIP (233 aa).

Positions 1–20 (MKMKLVTAAIMGLAMSTAMA) are cleaved as a signal peptide. In terms of domain architecture, PPIase FKBP-type spans 144–233 (SDTVTVEYTG…IHLISVKKAA (90 aa)).

The protein belongs to the FKBP-type PPIase family.

Its subcellular location is the cell outer membrane. The catalysed reaction is [protein]-peptidylproline (omega=180) = [protein]-peptidylproline (omega=0). Strongly inhibited by FK506 but is completely resistant to cyclosporin A. In terms of biological role, essential virulence factor associated with macrophage infectivity. Exhibits PPIase activity. The chain is Outer membrane protein MIP (mip) from Legionella longbeachae.